Here is a 103-residue protein sequence, read N- to C-terminus: OMEGA-ectatommitoxin(02)-Rm1d (103 aa).

A signal peptide spans methionine 1–arginine 30. 3 disulfide bridges follow: cysteine 39–cysteine 54, cysteine 49–cysteine 70, and cysteine 72–cysteine 81. An EGF-like domain is found at leucine 43–glycine 82.

It belongs to the EGF domain peptide family. In terms of tissue distribution, expressed by the venom gland.

Its subcellular location is the secreted. Ant peptide with probable defensive activity which acts as a potent agonist of the mammalian epidermal growth factor receptor (EGFR). Mimics, both structurally and functionally, vertebrate epidermal growth factor (EGF) peptide hormones. In vivo, intraplantar injection in mice causes long-lasting (several days) hypersensitivity of the injected paw to both mechanical and thermal stimuli. Its long-lasting effect is unusual for venom toxins whose effects are usually immediate. One possible explanation is that it would reduce the duration of a nest attack, discourage future attacks, or enhance the actions of subsequent exposure to other pain-inducing venom peptides. This is OMEGA-ectatommitoxin(02)-Rm1d from Rhytidoponera metallica (Australian green-headed ant).